The primary structure comprises 274 residues: Rhamnulose-1-phosphate aldolase (274 aa).

The active site involves Glu-117. 3 residues coordinate Zn(2+): His-141, His-143, and His-212.

It belongs to the aldolase class II family. RhaD subfamily. In terms of assembly, homotetramer. It depends on Zn(2+) as a cofactor.

It localises to the cytoplasm. The enzyme catalyses L-rhamnulose 1-phosphate = (S)-lactaldehyde + dihydroxyacetone phosphate. It functions in the pathway carbohydrate degradation; L-rhamnose degradation; glycerone phosphate from L-rhamnose: step 3/3. Its function is as follows. Catalyzes the reversible cleavage of L-rhamnulose-1-phosphate to dihydroxyacetone phosphate (DHAP) and L-lactaldehyde. The chain is Rhamnulose-1-phosphate aldolase from Escherichia coli O17:K52:H18 (strain UMN026 / ExPEC).